Consider the following 456-residue polypeptide: Proline--tRNA ligase (456 aa).

Belongs to the class-II aminoacyl-tRNA synthetase family. ProS type 3 subfamily. As to quaternary structure, homodimer.

It is found in the cytoplasm. It carries out the reaction tRNA(Pro) + L-proline + ATP = L-prolyl-tRNA(Pro) + AMP + diphosphate. Catalyzes the attachment of proline to tRNA(Pro) in a two-step reaction: proline is first activated by ATP to form Pro-AMP and then transferred to the acceptor end of tRNA(Pro). The sequence is that of Proline--tRNA ligase from Methanococcus aeolicus (strain ATCC BAA-1280 / DSM 17508 / OCM 812 / Nankai-3).